A 332-amino-acid chain; its full sequence is Serpentine receptor class gamma-3 (332 aa).

Helical transmembrane passes span 23–43 (FAYL…IWVS), 72–92 (LIFT…SEIV), 101–121 (IYYC…IFIA), 144–164 (IMLI…LISD), 184–204 (WASL…ITMV), 231–251 (AALI…FAFF), and 263–283 (YLRF…LLLV).

It belongs to the nematode receptor-like protein srg family.

The protein localises to the membrane. The sequence is that of Serpentine receptor class gamma-3 (srg-3) from Caenorhabditis elegans.